A 171-amino-acid chain; its full sequence is UPF0312 protein SAOUHSC_03022 (171 aa).

It belongs to the UPF0312 family.

This Staphylococcus aureus (strain NCTC 8325 / PS 47) protein is UPF0312 protein SAOUHSC_03022.